The primary structure comprises 54 residues: Apelin receptor early endogenous ligand (54 aa).

A signal peptide spans M1 to S25.

It belongs to the Elabela/Toddler family. Interacts with APLNR.

It localises to the secreted. Its subcellular location is the extracellular space. Peptide hormone that functions as endogenous ligand for the G-protein-coupled apelin receptor (APLNR/APJ), that plays a role in the regulation of normal cardiovascular function and fluid homeostasis. Functions as a balanced agonist activating both G(i) protein pathway and beta-arrestin pathway of APLNR. Downstream G proteins activation, apelin can inhibit cAMP production and activate key intracellular effectors such as ERKs. On the other hand, APLNR activation induces beta-arrestin recruitment to the membrane leading to desensitization and internalization of the receptor. Required for mesendodermal differentiation, blood vessels formation and heart morphogenesis during early development and for adult cardiovascular homeostasis. Acts as a motogen by promoting mesendodermal cell migration during gastrulation by binding and activating APLNR. Acts as an early embryonic regulator of cellular movement with a role in migration and development of cardiac progenitor cells. May act as a chemoattractant for the activation of angioblast migration toward the embryonic midline, i.e. the position of the future vessel formation, during vasculogenesis. Positively regulates sinus venosus (SV)-derived endothelial cells migration into the developing heart to promote coronary blood vessel sprouting. Plays a role in placental vascular development; promotes placental trophoblast invasion and spiral artery remodeling in the uterus. Involved in the regulation of maternal cardiovascular homeostasis to prevent gestational hypertension and for potent cardioprotective functions during heart failure. Mediates myocardial contractility in an ERK1/2-dependent manner. The sequence is that of Apelin receptor early endogenous ligand from Rattus norvegicus (Rat).